Reading from the N-terminus, the 416-residue chain is Glutamyl-tRNA reductase (416 aa).

Residues 51 to 54 (TCNR), Ser110, 115 to 117 (EPQ), and Gln121 each bind substrate. Catalysis depends on Cys52, which acts as the Nucleophile. Residue 190-195 (GAGQTG) coordinates NADP(+).

The protein belongs to the glutamyl-tRNA reductase family. As to quaternary structure, homodimer.

It carries out the reaction (S)-4-amino-5-oxopentanoate + tRNA(Glu) + NADP(+) = L-glutamyl-tRNA(Glu) + NADPH + H(+). It functions in the pathway porphyrin-containing compound metabolism; protoporphyrin-IX biosynthesis; 5-aminolevulinate from L-glutamyl-tRNA(Glu): step 1/2. In terms of biological role, catalyzes the NADPH-dependent reduction of glutamyl-tRNA(Glu) to glutamate 1-semialdehyde (GSA). The chain is Glutamyl-tRNA reductase from Francisella tularensis subsp. tularensis (strain FSC 198).